The primary structure comprises 160 residues: Cytochrome b6-f complex subunit 4 (160 aa).

Transmembrane regions (helical) follow at residues 36–56 (LLYM…GLAV), 95–115 (LLGI…PFIE), and 131–151 (AVFL…ALPI).

The protein belongs to the cytochrome b family. PetD subfamily. The 4 large subunits of the cytochrome b6-f complex are cytochrome b6, subunit IV (17 kDa polypeptide, PetD), cytochrome f and the Rieske protein, while the 4 small subunits are PetG, PetL, PetM and PetN. The complex functions as a dimer.

It localises to the cellular thylakoid membrane. Its function is as follows. Component of the cytochrome b6-f complex, which mediates electron transfer between photosystem II (PSII) and photosystem I (PSI), cyclic electron flow around PSI, and state transitions. The polypeptide is Cytochrome b6-f complex subunit 4 (Synechococcus elongatus (strain ATCC 33912 / PCC 7942 / FACHB-805) (Anacystis nidulans R2)).